The following is a 503-amino-acid chain: Pre-glycoprotein polyprotein GP complex (503 aa).

A lipid anchor (N-myristoyl glycine; by host) is attached at glycine 2. At 2-17 (GQIVTLIQSIPEVLQE) the chain is on the extracellular side. A helical membrane pass occupies residues 18–33 (VFNVALIIVSVLCIVK). The Cytoplasmic portion of the chain corresponds to 34 to 58 (GFVNLMRCGLFQLVTFLILSGRSCD). Cysteine 57 is a binding site for Zn(2+). Over 59 to 446 (SMMIDRRHNL…QGKTPLALTD (388 aa)) the chain is Extracellular. 4 cysteine pairs are disulfide-bonded: cysteine 86–cysteine 248, cysteine 293–cysteine 306, cysteine 315–cysteine 324, and cysteine 378–cysteine 399. Asparagine 89, asparagine 111, asparagine 181, and asparagine 241 each carry an N-linked (GlcNAc...) asparagine; by host glycan. Residues asparagine 379, asparagine 387, asparagine 404, and asparagine 409 are each glycosylated (N-linked (GlcNAc...) asparagine; by host). A helical membrane pass occupies residues 447–467 (ICFWSLVFYTITVFLHIVGIP). The Cytoplasmic segment spans residues 468–503 (THRHIIGDGCPKPHRITRNSLCSCGYYKYQRNLTNG). The Zn(2+) site is built by histidine 469, histidine 471, cysteine 477, histidine 481, cysteine 489, and cysteine 491.

Belongs to the arenaviridae GPC protein family. As to quaternary structure, interacts with glycoprotein G2. Part of the GP complex (GP-C) together with glycoprotein G1 and glycoprotein G2. The GP-complex interacts with protein Z, which interacts with ribonucleocapsid; these interactions may induce virion budding. Homotrimer; disulfide-linked. In pre-fusion state, G1 homotrimers bind G2 homotrimers via ionic interactions. Part of the GP complex (GP-C) together with glycoprotein G2 and the stable signal peptide. The GP-complex interacts with protein Z, which interacts with ribonucleocapsid; these interactions may induce virion budding. In terms of assembly, homotrimer. Interacts with the stable signal peptide. In pre-fusion state, G2 homotrimers bind G1 homotrimers via ionic interactions. Part of the GP complex (GP-C) together with glycoprotein G1 and the stable signal peptide. Acidification in the endosome triggers rearrangements, which ultimately leads to a 6 helix bundle formed by the two heptad repeat domains (HR1 and HR2) in post-fusion state. The GP-complex interacts with protein Z, which interacts with ribonucleocapsid; these interactions may induce virion budding. In terms of processing, specific enzymatic cleavages in vivo yield mature proteins. GP-C polyprotein is cleaved in the endoplasmic reticulum by the host protease MBTPS1. Only cleaved glycoprotein is incorporated into virions. The SSP remains stably associated with the GP complex following cleavage by signal peptidase and plays crucial roles in the trafficking of GP through the secretory pathway. Post-translationally, myristoylation is necessary for GP2-mediated fusion activity.

Its subcellular location is the virion membrane. The protein resides in the host endoplasmic reticulum membrane. It is found in the host Golgi apparatus membrane. The protein localises to the host cell membrane. In terms of biological role, functions as a cleaved signal peptide that is retained as the third component of the GP complex (GP-C). Helps to stabilize the spike complex in its native conformation. The SSP is required for efficient glycoprotein expression, post-translational maturation cleavage of G1 and G2, glycoprotein transport to the cell surface plasma membrane, formation of infectious virus particles, and acid pH-dependent glycoprotein-mediated cell fusion. Functionally, forms the virion spikes together with glycoprotein G2. The glycoprotein spike trimers are connected to the underlying matrix. Interacts with the host receptor leading to virus endocytosis. Its function is as follows. Forms the virion spikes together with glycoprotein G1. The glycoprotein spike trimers are connected to the underlying matrix. Class I viral fusion protein that directs fusion of viral and host endosomal membranes, leading to delivery of the nucleocapsid into the cytoplasm. Membrane fusion is mediated by irreversible conformational changes induced by acidification. The sequence is that of Pre-glycoprotein polyprotein GP complex from Cavia cutleri (Guinea pig).